The primary structure comprises 202 residues: V-type proton ATPase subunit E (202 aa).

The protein belongs to the V-ATPase E subunit family.

Produces ATP from ADP in the presence of a proton gradient across the membrane. This chain is V-type proton ATPase subunit E, found in Halothermothrix orenii (strain H 168 / OCM 544 / DSM 9562).